A 106-amino-acid polypeptide reads, in one-letter code: ATPase inhibitor, mitochondrial (106 aa).

A mitochondrion-targeting transit peptide spans 1–25; that stretch reads MAGSALAVRARFGVWGMKVLQTRGF. The tract at residues 26–52 is N-terminal inhibitory region; the sequence is VSDSSDSMDTGAGSIREAGGAFGKREK. Residues 26–58 form a disordered region; sequence VSDSSDSMDTGAGSIREAGGAFGKREKAEEDRY. Position 39 is a phosphoserine (Ser-39). Positions 48–58 are enriched in basic and acidic residues; that stretch reads GKREKAEEDRY. Residues 60 to 106 are a coiled coil; the sequence is REKTKEQLAALRKHHEDEIDHHSKEIERLQKQIERHKKKIQQLKNNH. Residues 74–106 form an antiparallel alpha-helical coiled coil region region; it reads HEDEIDHHSKEIERLQKQIERHKKKIQQLKNNH. Lys-103 carries the N6-succinyllysine modification.

The protein belongs to the ATPase inhibitor family. As to quaternary structure, homodimer; represents the active form and is present at a pH value below 6.5. Homotetramer; represents the inactive form and is present at a pH value above 7.0.

Its subcellular location is the mitochondrion. Its function is as follows. Endogenous F(1)F(o)-ATPase inhibitor limiting ATP depletion when the mitochondrial membrane potential falls below a threshold and the F(1)F(o)-ATP synthase starts hydrolyzing ATP to pump protons out of the mitochondrial matrix. Required to avoid the consumption of cellular ATP when the F(1)F(o)-ATP synthase enzyme acts as an ATP hydrolase. Indirectly acts as a regulator of heme synthesis in erythroid tissues: regulates heme synthesis by modulating the mitochondrial pH and redox potential, allowing FECH to efficiently catalyze the incorporation of iron into protoporphyrin IX to produce heme. The chain is ATPase inhibitor, mitochondrial from Mus musculus (Mouse).